We begin with the raw amino-acid sequence, 329 residues long: Deoxynucleotidyltransferase terminal-interacting protein 1 (329 aa).

2 disordered regions span residues 1 to 22 (MGAT…GGLE) and 147 to 178 (KRGR…ILSS). The segment at 56–147 (MTTSFTDPAI…RLTHELPGIK (92 aa)) is important for dimerization. Over residues 147 to 158 (KRGRQAEEECAH) the composition is skewed to basic and acidic residues. Residues 159–173 (RGSPLPKKRKGRPPG) constitute a DNA-binding region (a.T hook). Serine 161 carries the phosphoserine modification. Residues 164–170 (PKKRKGR) carry the Nuclear localization signal motif. The segment at 197–316 (REGPKWDPAR…MRKYMETLRT (120 aa)) is important for DNA and nucleosome binding. A DNA-binding region (H-T-H motif) is located at residues 216–237 (GSRANKALGMGGTRGRIYIKHP).

As to quaternary structure, monomer and homodimer. A minor proportion may form homotrimers. Interacts with ZNF541. Interacts with the terminal deoxynucleotidyltransferase DNTT. Interacts with TRERF1. Identified in a histone deacetylase complex that contains DNTTIP1, HDAC1 and MIDEAS; this complex assembles into a tetramer that contains four copies of each protein chain. Component of a histone deacetylase complex containing DNTTIP1, ZNF541, HDAC1 and HDAC2. Identified in a complex with KCTD19, HDAC1, HDAC2 and ZNF541.

It is found in the nucleus. Its function is as follows. Increases DNTT terminal deoxynucleotidyltransferase activity (in vitro). Also acts as a transcriptional regulator, binding to the consensus sequence 5'-GNTGCATG-3' following an AT-tract. Associates with RAB20 promoter and positively regulates its transcription. Binds DNA and nucleosomes; may recruit HDAC1 complexes to nucleosomes or naked DNA. The polypeptide is Deoxynucleotidyltransferase terminal-interacting protein 1 (DNTTIP1) (Homo sapiens (Human)).